Reading from the N-terminus, the 313-residue chain is Homoserine O-succinyltransferase (313 aa).

Cys142 (acyl-thioester intermediate) is an active-site residue. Residues Lys163 and Ser192 each coordinate substrate. Catalysis depends on His235, which acts as the Proton acceptor. Glu237 is a catalytic residue. Arg249 serves as a coordination point for substrate.

This sequence belongs to the MetA family.

It localises to the cytoplasm. It catalyses the reaction L-homoserine + succinyl-CoA = O-succinyl-L-homoserine + CoA. The protein operates within amino-acid biosynthesis; L-methionine biosynthesis via de novo pathway; O-succinyl-L-homoserine from L-homoserine: step 1/1. Transfers a succinyl group from succinyl-CoA to L-homoserine, forming succinyl-L-homoserine. This is Homoserine O-succinyltransferase from Shewanella sp. (strain ANA-3).